Consider the following 370-residue polypeptide: S-adenosylmethionine decarboxylase proenzyme (370 aa).

Residue Phe-28 participates in substrate binding. Active-site residues include Glu-29 and Glu-32. Glu-85 provides a ligand contact to substrate. Ser-86 (schiff-base intermediate with substrate; via pyruvic acid) is an active-site residue. Ser-86 is subject to Pyruvic acid (Ser); by autocatalysis. Cys-100 serves as the catalytic Proton donor; for catalytic activity. Active-site proton acceptor; for processing activity residues include Ser-249 and His-262. Glu-266 contacts substrate.

Belongs to the eukaryotic AdoMetDC family. Forms a heterodimer with catalytically inactive AdoMetDC prozyme; heterodimerization is required to activate AdoMetDC. The cofactor is pyruvate. Is synthesized initially as an inactive proenzyme. Formation of the active enzyme involves a self-maturation process in which the active site pyruvoyl group is generated from an internal serine residue via an autocatalytic post-translational modification. Two non-identical subunits are generated from the proenzyme in this reaction, and the pyruvate is formed at the N-terminus of the alpha chain, which is derived from the carboxyl end of the proenzyme. The post-translation cleavage follows an unusual pathway, termed non-hydrolytic serinolysis, in which the side chain hydroxyl group of the serine supplies its oxygen atom to form the C-terminus of the beta chain, while the remainder of the serine residue undergoes an oxidative deamination to produce ammonia and the pyruvoyl group blocking the N-terminus of the alpha chain.

The catalysed reaction is S-adenosyl-L-methionine + H(+) = S-adenosyl 3-(methylsulfanyl)propylamine + CO2. It functions in the pathway amine and polyamine biosynthesis; S-adenosylmethioninamine biosynthesis; S-adenosylmethioninamine from S-adenosyl-L-methionine: step 1/1. With respect to regulation, allosterically activated by AdoMetDC prozyme. Activated by putrescine and to a lesser extent by spermidine, norspermidine and spermine. Inhibited by 5'-([(Z)-4-amino-2-butenyl]methylamino)-5'-deoxyadenosine (MDL 73811). Its function is as follows. In association with the catalytically inactive AdoMetDC prozyme, catalyzes the decarboxylation of S-adenosyl-L-methionine which is essential for the biosynthesis of the polyamine spermidine. Required for growth and survival during the bloodstream life cycle stage. In Trypanosoma brucei brucei, this protein is S-adenosylmethionine decarboxylase proenzyme.